The sequence spans 50 residues: Insulin-1 (50 aa).

Cystine bridges form between Cys7–Cys36, Cys19–Cys49, and Cys35–Cys40.

This sequence belongs to the insulin family. As to quaternary structure, heterodimer of a B chain and an A chain linked by two disulfide bonds.

It localises to the secreted. Its function is as follows. Insulin decreases blood glucose concentration. It increases cell permeability to monosaccharides, amino acids and fatty acids. It accelerates glycolysis, the pentose phosphate cycle, and glycogen synthesis in liver. The chain is Insulin-1 from Katsuwonus pelamis (Skipjack tuna).